Here is a 141-residue protein sequence, read N- to C-terminus: D-aminoacyl-tRNA deacylase (141 aa).

A Gly-cisPro motif, important for rejection of L-amino acids motif is present at residues 133 to 134 (GP).

This sequence belongs to the DTD family. As to quaternary structure, homodimer.

It localises to the cytoplasm. The catalysed reaction is glycyl-tRNA(Ala) + H2O = tRNA(Ala) + glycine + H(+). It catalyses the reaction a D-aminoacyl-tRNA + H2O = a tRNA + a D-alpha-amino acid + H(+). Its function is as follows. An aminoacyl-tRNA editing enzyme that deacylates mischarged D-aminoacyl-tRNAs. Also deacylates mischarged glycyl-tRNA(Ala), protecting cells against glycine mischarging by AlaRS. Acts via tRNA-based rather than protein-based catalysis; rejects L-amino acids rather than detecting D-amino acids in the active site. By recycling D-aminoacyl-tRNA to D-amino acids and free tRNA molecules, this enzyme counteracts the toxicity associated with the formation of D-aminoacyl-tRNA entities in vivo and helps enforce protein L-homochirality. This Streptomyces coelicolor (strain ATCC BAA-471 / A3(2) / M145) protein is D-aminoacyl-tRNA deacylase.